The following is a 31-amino-acid chain: Dermaseptin-7.1TR (31 aa).

Position 31 is a glutamine amide (glutamine 31).

As to expression, expressed by the skin glands.

It is found in the secreted. Its function is as follows. Has antimicrobial activity. The sequence is that of Dermaseptin-7.1TR from Phyllomedusa trinitatis (Trinidad leaf frog).